The chain runs to 81 residues: uncharacterized protein (81 aa).

This is an uncharacterized protein from Sulfolobus islandicus rod-shaped virus 1 (SIRV-1).